Here is a 536-residue protein sequence, read N- to C-terminus: MEKFGVHNPATELATVGLGSAASVRYNFSAAALYEESIRRGEAELTAQGALRALTGQHTGRSPRDKFVVRDANTDGEIWWDNNKPLSPEHFALLRADMLAHAAGKDLFVQDLVGGAEEGHALPTRVVTEFAWHSLFIRNLLIRPETAALATFVPKLTIIDLPSFKADPARHGCRTETVIACDLTNGLVLIGGTSYAGEMKKSVFTVLNYLLPAKGVMPMHCSANVGPDGDAAVFFGLSGTGKTTLSADPARTLIGDDEHGWSENGIFNFEGGCYAKTIRLSAEAEPEIYATTQRFGTVLENVVLNEGREPNFDDGSLTENTRCAYPMHFIPNASETGRAGHPKTIIMLTADAFGVMPPIARLTPDQAMYHFLSGYTAKVAGTEKGVVEPEATFSTCFGAPFMPRHPAEYGNLLKDLISRHGVNCWLVNTGWTGGAYGTGKRMPIKATRALLAAALSGELGQVEFRADPNFGFAVPVSVNGVDGGILDPRSTWADKTAYDVQAEKLVSMFIANFAKFEDHVDGGVRDAAPGVKVAAE.

Substrate contacts are provided by Arg61, Tyr195, and Lys201. ATP-binding positions include Lys201, His220, and 236–244 (GLSGTGKTT). Residues Lys201 and His220 each contribute to the Mn(2+) site. Asp257 contributes to the Mn(2+) binding site. ATP contacts are provided by Glu285, Arg322, and Thr447. Residue Arg322 participates in substrate binding.

It belongs to the phosphoenolpyruvate carboxykinase (ATP) family. Mn(2+) is required as a cofactor.

It is found in the cytoplasm. The catalysed reaction is oxaloacetate + ATP = phosphoenolpyruvate + ADP + CO2. Its pathway is carbohydrate biosynthesis; gluconeogenesis. Involved in the gluconeogenesis. Catalyzes the conversion of oxaloacetate (OAA) to phosphoenolpyruvate (PEP) through direct phosphoryl transfer between the nucleoside triphosphate and OAA. This chain is Phosphoenolpyruvate carboxykinase (ATP), found in Rhizobium etli (strain CIAT 652).